Here is a 197-residue protein sequence, read N- to C-terminus: uncharacterized protein (197 aa).

Disordered stretches follow at residues methionine 1–valine 30 and proline 115–leucine 174. Residues lysine 21–valine 30 are compositionally biased toward low complexity. A compositionally biased stretch (acidic residues) spans lysine 123–glutamate 137. Residues lysine 157–serine 170 are compositionally biased toward basic residues.

This is an uncharacterized protein from Dictyostelium discoideum (Social amoeba).